An 839-amino-acid polypeptide reads, in one-letter code: Homeobox-leucine zipper protein HOX10 (839 aa).

2 disordered regions span residues 1–24 (MAAA…SGMD) and 132–157 (QNTP…RDAS). Positions 24-87 (DSGKYVRYTP…NRRCRDKQRK (64 aa)) form a DNA-binding region, homeobox. A coiled-coil region spans residues 91 to 134 (RLQAVNRKLTAMNKLLMEENERLQKQVSQLVHENAHMRQQLQNT). The region spanning 155–383 (DASNPSGLLS…IAQETSGEVV (229 aa)) is the START domain.

The protein belongs to the HD-ZIP homeobox family. Class III subfamily. In terms of tissue distribution, expressed in stems, leaf sheaths and blades and panicles.

It localises to the nucleus. Functionally, probable transcription factor. The sequence is that of Homeobox-leucine zipper protein HOX10 (HOX10) from Oryza sativa subsp. japonica (Rice).